The chain runs to 486 residues: Fructose dehydrogenase cytochrome subunit (486 aa).

An N-terminal signal peptide occupies residues 1–25 (MRYFRPLSATAMTTVLLLAGTNVRA). Cytochrome c domains lie at 38 to 142 (PSIS…MTEV), 186 to 294 (DDWN…RSVP), and 330 to 423 (TKTT…LSHF). Positions 52, 55, 56, 201, 204, 205, 343, 346, and 347 each coordinate heme c. The chain crosses the membrane as a helical span at residues 458-478 (LLGTGGILGAILVVAGLWWLI).

Heterotrimer composed of FdhL, FdhS and FdhC. Binds 3 heme c groups covalently per subunit.

It is found in the cell membrane. Its function is as follows. Cytochrome subunit of fructose dehydrogenase, an enzyme that catalyzes the oxidation of D-fructose to produce 5-keto-D-fructose. In the complex, mediates both the electron transfer to ubiquinone and the anchoring of the complex to the membrane. The chain is Fructose dehydrogenase cytochrome subunit (fdhC) from Gluconobacter japonicus.